The chain runs to 147 residues: Holo-[acyl-carrier-protein] synthase (147 aa).

Mg(2+)-binding residues include Asp-7 and Glu-60.

The protein belongs to the P-Pant transferase superfamily. AcpS family. Mg(2+) serves as cofactor.

The protein resides in the cytoplasm. It carries out the reaction apo-[ACP] + CoA = holo-[ACP] + adenosine 3',5'-bisphosphate + H(+). In terms of biological role, transfers the 4'-phosphopantetheine moiety from coenzyme A to a Ser of acyl-carrier-protein. This chain is Holo-[acyl-carrier-protein] synthase, found in Bifidobacterium animalis subsp. lactis (strain AD011).